A 90-amino-acid polypeptide reads, in one-letter code: Secretoglobin family 1D member 2 (90 aa).

The signal sequence occupies residues 1-21 (MKLSVCLLLVTLALCCYQANA).

The protein belongs to the secretoglobin family. Lipophilin subfamily. In terms of tissue distribution, highest expression was found in skeletal muscle. Expressed as well in thymus, trachea, kidney, steroid responsive tissues (prostate, testis, uterus, breast and ovary) and salivary gland.

The protein localises to the secreted. In terms of biological role, may bind androgens and other steroids, may also bind estramustine, a chemotherapeutic agent used for prostate cancer. May be under transcriptional regulation of steroid hormones. The protein is Secretoglobin family 1D member 2 (SCGB1D2) of Homo sapiens (Human).